We begin with the raw amino-acid sequence, 677 residues long: Methionine--tRNA ligase (677 aa).

The 'HIGH' region motif lies at 15–25 (PYANGSIHLGH). 4 residues coordinate Zn(2+): Cys146, Cys149, Cys159, and Cys162. Residues 333-337 (KMSKS) carry the 'KMSKS' region motif. Position 336 (Lys336) interacts with ATP. The tRNA-binding domain maps to 575–677 (DFAKVDLRVA…AGAKPGHQVK (103 aa)).

It belongs to the class-I aminoacyl-tRNA synthetase family. MetG type 1 subfamily. Homodimer. Requires Zn(2+) as cofactor.

The protein localises to the cytoplasm. It catalyses the reaction tRNA(Met) + L-methionine + ATP = L-methionyl-tRNA(Met) + AMP + diphosphate. In terms of biological role, is required not only for elongation of protein synthesis but also for the initiation of all mRNA translation through initiator tRNA(fMet) aminoacylation. The sequence is that of Methionine--tRNA ligase from Escherichia coli (strain UTI89 / UPEC).